A 308-amino-acid chain; its full sequence is Pantothenate kinase (308 aa).

An ATP-binding site is contributed by 93-100; the sequence is GSVAVGKS.

This sequence belongs to the prokaryotic pantothenate kinase family.

It localises to the cytoplasm. It carries out the reaction (R)-pantothenate + ATP = (R)-4'-phosphopantothenate + ADP + H(+). It participates in cofactor biosynthesis; coenzyme A biosynthesis; CoA from (R)-pantothenate: step 1/5. The protein is Pantothenate kinase of Corynebacterium aurimucosum (strain ATCC 700975 / DSM 44827 / CIP 107346 / CN-1) (Corynebacterium nigricans).